The chain runs to 126 residues: Fluoride-specific ion channel FluC (126 aa).

4 helical membrane-spanning segments follow: residues 5–25 (LHFLAVGVGAAAGAWLRWLLG), 35–55 (WGTLAANLGGGYLIGLILGLI), 68–88 (ALVTGFLGGLTTFSTFSAEVV), and 99–119 (AAGYAVVSLAGSLCLTALGLA). 2 residues coordinate Na(+): Gly-75 and Thr-78.

Belongs to the fluoride channel Fluc/FEX (TC 1.A.43) family.

The protein resides in the cell inner membrane. The enzyme catalyses fluoride(in) = fluoride(out). Na(+) is not transported, but it plays an essential structural role and its presence is essential for fluoride channel function. In terms of biological role, fluoride-specific ion channel. Important for reducing fluoride concentration in the cell, thus reducing its toxicity. This Bordetella avium (strain 197N) protein is Fluoride-specific ion channel FluC.